A 337-amino-acid polypeptide reads, in one-letter code: Nucleoid-associated protein HS_0228 (337 aa).

This sequence belongs to the YejK family.

It localises to the cytoplasm. The protein resides in the nucleoid. The chain is Nucleoid-associated protein HS_0228 from Histophilus somni (strain 129Pt) (Haemophilus somnus).